The following is a 620-amino-acid chain: Tyrosine-protein kinase ITK/TSK (620 aa).

The PH domain occupies 4-111 (FILLEEQLIK…WVLALKEETR (108 aa)). The Btk-type zinc-finger motif lies at 113-149 (NNSLVPKYHPNFWMDGKWRCCSQLEKLATGCAQYDPT). Histidine 121, cysteine 132, cysteine 133, and cysteine 143 together coordinate Zn(2+). The SH3 domain maps to 171–231 (PEETVVIALY…PSSYLVEKSP (61 aa)). The residue at position 180 (tyrosine 180) is a Phosphotyrosine; by autocatalysis. The region spanning 239 to 338 (WYNKSISRDK…GLVTRLRYPV (100 aa)) is the SH2 domain. The Protein kinase domain occupies 363 to 615 (LTFVQEIGSG…SRLLRQLAEI (253 aa)). ATP contacts are provided by residues 369-377 (IGSGQFGLV) and lysine 391. Residue aspartate 482 is the Proton acceptor of the active site. Tyrosine 512 carries the post-translational modification Phosphotyrosine; by LCK. Phosphoserine is present on serine 565.

The protein belongs to the protein kinase superfamily. Tyr protein kinase family. TEC subfamily. In terms of assembly, homooligomerizes; this association negatively regulates kinase activity. Interacts with PPIA/CYPA; this interaction regulates TCR signal strength via a proline-directed conformational switch in ITK. Interacts with THEMIS. Interacts with FASLG. Interacts with VAV1; this interaction is important for VAV1 localization and TCR-induced actin polarization. Interacts with TBX21. Requires Zn(2+) as cofactor. Post-translationally, phosphorylated at Tyr-512 in the activation loop of the kinase domain by LCK. Subsequent autophosphorylation at Tyr-180 leads to the kinase activation. The autophosphorylated Tyr-180 lies within the substrate binding sequence of the SH3 domain. In terms of processing, ubiquitinated. As to expression, T-cell lines and natural killer cell lines.

Its subcellular location is the cytoplasm. The protein resides in the nucleus. The enzyme catalyses L-tyrosyl-[protein] + ATP = O-phospho-L-tyrosyl-[protein] + ADP + H(+). Tyrosine kinase that plays an essential role in regulation of the adaptive immune response. Regulates the development, function and differentiation of conventional T-cells and nonconventional NKT-cells. When antigen presenting cells (APC) activate T-cell receptor (TCR), a series of phosphorylation lead to the recruitment of ITK to the cell membrane, in the vicinity of the stimulated TCR receptor, where it is phosphorylated by LCK. Phosphorylation leads to ITK autophosphorylation and full activation. Once activated, phosphorylates PLCG1, leading to the activation of this lipase and subsequent cleavage of its substrates. In turn, the endoplasmic reticulum releases calcium in the cytoplasm and the nuclear activator of activated T-cells (NFAT) translocates into the nucleus to perform its transcriptional duty. Phosphorylates 2 essential adapter proteins: the linker for activation of T-cells/LAT protein and LCP2. Then, a large number of signaling molecules such as VAV1 are recruited and ultimately lead to lymphokine production, T-cell proliferation and differentiation. Required for TCR-mediated calcium response in gamma-delta T-cells, may also be involved in the modulation of the transcriptomic signature in the Vgamma2-positive subset of immature gamma-delta T-cells. Phosphorylates TBX21 at 'Tyr-530' and mediates its interaction with GATA3. This chain is Tyrosine-protein kinase ITK/TSK (ITK), found in Homo sapiens (Human).